We begin with the raw amino-acid sequence, 177 residues long: MSSAPNASALMKIGQLKKPYGIKGWLWVFSETDDRTAIFDIKPWWMKTATGMKPLTVKAWREQGTGIVAQFEQIPDRNVAETMNGVTLWVEQDILPEPAEDEYYWSDLVSLRVMNEQDEYLGDITEMFETGAHAIMRVAATTDSLDKEERLIPWHKQTVVKVDLTEKTVLVAWPSDY.

The 78-residue stretch at 100–177 (EDEYYWSDLV…TVLVAWPSDY (78 aa)) folds into the PRC barrel domain.

The protein belongs to the RimM family. In terms of assembly, binds ribosomal protein uS19.

Its subcellular location is the cytoplasm. Its function is as follows. An accessory protein needed during the final step in the assembly of 30S ribosomal subunit, possibly for assembly of the head region. Essential for efficient processing of 16S rRNA. May be needed both before and after RbfA during the maturation of 16S rRNA. It has affinity for free ribosomal 30S subunits but not for 70S ribosomes. The chain is Ribosome maturation factor RimM from Psychrobacter cryohalolentis (strain ATCC BAA-1226 / DSM 17306 / VKM B-2378 / K5).